We begin with the raw amino-acid sequence, 160 residues long: SsrA-binding protein (160 aa).

Belongs to the SmpB family.

Its subcellular location is the cytoplasm. In terms of biological role, required for rescue of stalled ribosomes mediated by trans-translation. Binds to transfer-messenger RNA (tmRNA), required for stable association of tmRNA with ribosomes. tmRNA and SmpB together mimic tRNA shape, replacing the anticodon stem-loop with SmpB. tmRNA is encoded by the ssrA gene; the 2 termini fold to resemble tRNA(Ala) and it encodes a 'tag peptide', a short internal open reading frame. During trans-translation Ala-aminoacylated tmRNA acts like a tRNA, entering the A-site of stalled ribosomes, displacing the stalled mRNA. The ribosome then switches to translate the ORF on the tmRNA; the nascent peptide is terminated with the 'tag peptide' encoded by the tmRNA and targeted for degradation. The ribosome is freed to recommence translation, which seems to be the essential function of trans-translation. The sequence is that of SsrA-binding protein from Zymomonas mobilis subsp. mobilis (strain ATCC 31821 / ZM4 / CP4).